Reading from the N-terminus, the 323-residue chain is Serpentine receptor class gamma-5 (323 aa).

7 helical membrane-spanning segments follow: residues 31–51, 63–83, 98–117, 151–171, 193–213, 245–265, and 272–292; these read QLFY…IMLF, FIIF…DLFI, YPLF…IYNY, IPVT…NVII, WASL…ITVF, AAFF…ITAA, and FLQG…MVLI.

Belongs to the nematode receptor-like protein srg family.

It localises to the membrane. This Caenorhabditis elegans protein is Serpentine receptor class gamma-5 (srg-5).